Reading from the N-terminus, the 203-residue chain is EF-hand calcium-binding domain-containing protein 8 (203 aa).

The tract at residues 61 to 107 is disordered; the sequence is SSEKPGESPKPQKMAQPGGSQKKETSRSVPVTDPTSHNSEINQRDQQ. Over residues 87–107 the composition is skewed to polar residues; sequence RSVPVTDPTSHNSEINQRDQQ. EF-hand domains lie at 111–145 and 146–181; these read MHLA…VLSS and MSEE…EFQG.

The sequence is that of EF-hand calcium-binding domain-containing protein 8 (Efcab8) from Mus musculus (Mouse).